The sequence spans 1110 residues: Coiled-coil domain-containing protein 150 (1110 aa).

Coiled coils occupy residues 122-250 (LENL…TSAS), 288-313 (QDLLAQEQRKNEDLGMTISQLKSDLN), 413-695 (AAHA…KEDN), and 728-1048 (SEIA…EAHR).

In Mus musculus (Mouse), this protein is Coiled-coil domain-containing protein 150 (Ccdc150).